The following is a 129-amino-acid chain: uncharacterized protein (129 aa).

The segment at 34–57 is disordered; it reads SAPLRPPRELHAAPPPATPTQTVV.

This is an uncharacterized protein from Homo sapiens (Human).